Reading from the N-terminus, the 295-residue chain is Trehalose/maltose transport system permease protein MalF (295 aa).

7 consecutive transmembrane segments (helical) span residues 16–36 (LGYL…ILPV), 79–99 (VSFS…FALI), 112–132 (AIVL…WELM), 146–166 (ILGV…FAIV), 210–230 (ITLP…TIDA), 236–256 (IIYV…SLLA), and 267–287 (IGSA…IVYL). Residues 75 to 286 (TFVTVSFSFV…VLVLSFTIVY (212 aa)) form the ABC transmembrane type-1 domain.

Belongs to the binding-protein-dependent transport system permease family. The complex is composed of two ATP-binding proteins (MalK), two transmembrane proteins (MalG and MalF) and a solute-binding protein (MalE).

Its subcellular location is the cell membrane. Part of the ABC transporter complex MalEFGK involved in trehalose/maltose import. Responsible for the translocation of the substrate across the membrane. This Thermococcus litoralis (strain ATCC 51850 / DSM 5473 / JCM 8560 / NS-C) protein is Trehalose/maltose transport system permease protein MalF (malF).